A 280-amino-acid chain; its full sequence is Retinoschisin (280 aa).

An N-terminal signal peptide occupies residues 1 to 23 (MHLPREAFLLALAGAFIFPSSQQ). Residues 119 to 275 (CPYHRPLGFE…IALRLELLLC (157 aa)) enclose the F5/8 type C domain. Cystine bridges form between Cys-119/Cys-275 and Cys-166/Cys-198.

As to quaternary structure, homooctamer of 4 homodimers; disulfide-linked. The homooctamer has a flat, cogwheel structure with a diameter of about 14 nm. Two stacked octamers can assemble to form a hexadecamer.

It localises to the secreted. The protein resides in the cell membrane. Its function is as follows. Binds negatively charged membrane lipids, such as phosphatidylserine and phosphoinositides. May play a role in cell-cell adhesion processes in the retina, via homomeric interaction between octamers present on the surface of two neighboring cells. Required for normal structure and function of the retina. The polypeptide is Retinoschisin (xlrs1) (Takifugu rubripes (Japanese pufferfish)).